The chain runs to 376 residues: D-alanine--D-alanine ligase (376 aa).

Residues 153–366 enclose the ATP-grasp domain; the sequence is KLLLAGQGLP…YPELVHRLIQ (214 aa). ATP is bound at residue 185-240; the sequence is VEALGYPVFVKPARAGSSIGITRVTSREGLAAAVAEAVSHDPKVVVEAALVGREIE. Residues Asp317, Glu333, and Asn335 each coordinate Mg(2+).

This sequence belongs to the D-alanine--D-alanine ligase family. Requires Mg(2+) as cofactor. Mn(2+) serves as cofactor.

The protein localises to the cytoplasm. The enzyme catalyses 2 D-alanine + ATP = D-alanyl-D-alanine + ADP + phosphate + H(+). Its pathway is cell wall biogenesis; peptidoglycan biosynthesis. Cell wall formation. The polypeptide is D-alanine--D-alanine ligase (Kineococcus radiotolerans (strain ATCC BAA-149 / DSM 14245 / SRS30216)).